Consider the following 469-residue polypeptide: Adenosylhomocysteinase (469 aa).

Thr-58, Asp-133, and Glu-195 together coordinate substrate. Residue 196-198 (TTT) participates in NAD(+) binding. Residues Lys-225 and Asp-229 each contribute to the substrate site. Residues Asn-230, 259–264 (GFGDVG), Glu-282, Asn-317, 338–340 (IGH), and Asn-383 contribute to the NAD(+) site.

This sequence belongs to the adenosylhomocysteinase family. It depends on NAD(+) as a cofactor.

It is found in the cytoplasm. It catalyses the reaction S-adenosyl-L-homocysteine + H2O = L-homocysteine + adenosine. Its pathway is amino-acid biosynthesis; L-homocysteine biosynthesis; L-homocysteine from S-adenosyl-L-homocysteine: step 1/1. Its function is as follows. May play a key role in the regulation of the intracellular concentration of adenosylhomocysteine. This is Adenosylhomocysteinase from Rhodopseudomonas palustris (strain TIE-1).